The following is a 295-amino-acid chain: GTPase Era (295 aa).

Positions 3–170 (KSGFVTIVGR…VDLMKTELPE (168 aa)) constitute an Era-type G domain. Residues 11-18 (GRPNVGKS) form a G1 region. 11–18 (GRPNVGKS) provides a ligand contact to GTP. The interval 37–41 (QTTRN) is G2. Residues 58–61 (DTPG) are G3. GTP-binding positions include 58-62 (DTPGI) and 120-123 (NKID). The interval 120–123 (NKID) is G4. The interval 149–151 (IAA) is G5. Residues 201-278 (LRDEVPHGIA…NVKIWVKVRK (78 aa)) enclose the KH type-2 domain.

The protein belongs to the TRAFAC class TrmE-Era-EngA-EngB-Septin-like GTPase superfamily. Era GTPase family. As to quaternary structure, monomer.

The protein resides in the cytoplasm. It localises to the cell membrane. Functionally, an essential GTPase that binds both GDP and GTP, with rapid nucleotide exchange. Plays a role in 16S rRNA processing and 30S ribosomal subunit biogenesis and possibly also in cell cycle regulation and energy metabolism. In Clostridium botulinum (strain Eklund 17B / Type B), this protein is GTPase Era.